The following is a 283-amino-acid chain: 3-methyl-2-oxobutanoate hydroxymethyltransferase (283 aa).

Asp-44 and Asp-83 together coordinate Mg(2+). Residues 44-45 (DS), Asp-83, and Lys-112 contribute to the 3-methyl-2-oxobutanoate site. Glu-114 is a binding site for Mg(2+). Glu-181 serves as the catalytic Proton acceptor.

It belongs to the PanB family. In terms of assembly, homodecamer; pentamer of dimers. The cofactor is Mg(2+).

Its subcellular location is the cytoplasm. The enzyme catalyses 3-methyl-2-oxobutanoate + (6R)-5,10-methylene-5,6,7,8-tetrahydrofolate + H2O = 2-dehydropantoate + (6S)-5,6,7,8-tetrahydrofolate. Its pathway is cofactor biosynthesis; coenzyme A biosynthesis. Functionally, catalyzes the reversible reaction in which hydroxymethyl group from 5,10-methylenetetrahydrofolate is transferred onto alpha-ketoisovalerate to form ketopantoate. The polypeptide is 3-methyl-2-oxobutanoate hydroxymethyltransferase (Pyrococcus furiosus (strain ATCC 43587 / DSM 3638 / JCM 8422 / Vc1)).